A 480-amino-acid chain; its full sequence is Aspartyl/glutamyl-tRNA(Asn/Gln) amidotransferase subunit B (480 aa).

Belongs to the GatB/GatE family. GatB subfamily. In terms of assembly, heterotrimer of A, B and C subunits.

The catalysed reaction is L-glutamyl-tRNA(Gln) + L-glutamine + ATP + H2O = L-glutaminyl-tRNA(Gln) + L-glutamate + ADP + phosphate + H(+). It catalyses the reaction L-aspartyl-tRNA(Asn) + L-glutamine + ATP + H2O = L-asparaginyl-tRNA(Asn) + L-glutamate + ADP + phosphate + 2 H(+). Functionally, allows the formation of correctly charged Asn-tRNA(Asn) or Gln-tRNA(Gln) through the transamidation of misacylated Asp-tRNA(Asn) or Glu-tRNA(Gln) in organisms which lack either or both of asparaginyl-tRNA or glutaminyl-tRNA synthetases. The reaction takes place in the presence of glutamine and ATP through an activated phospho-Asp-tRNA(Asn) or phospho-Glu-tRNA(Gln). This is Aspartyl/glutamyl-tRNA(Asn/Gln) amidotransferase subunit B from Streptococcus pneumoniae (strain 70585).